Consider the following 626-residue polypeptide: MASPNGGVTTYDYHDSDSAAPVNAQTIEELHSLQRKAATTTKDGASPLQSISASLASLAREYGPNLVKGDPEATKGAPPVPIKHQQPSAAAATIAASDSSLKFTHVLYNLSPAELYEQAFGQKKSSFITSTGALATLSGAKTGRSPRDKRVVKDETTSQELWWGKGSPNIEMDERQFVINRERALDYLNSLDKVYVNDQFLNWDSENRIKVRIITSRAYHALFMHNMCIRPTEEELESFGTPDFTIYNAGEFPANRYANYMTSSTSINISLARREMVILGTQYAGEMKKGLFGVMHYLMPKRGILSLHSGCNMGKEGDVALFFGLSGTGKTTLSTDHNRLLIGDDEHCWSDNGVSNIEGGCYAKCIDLSQEKEPDIWNAIKFGTVLENVVFNERTREVDYADKSITENTRAAYPIEFIPNAKIPCVGPHPKNVILLACDAYGVLPPVSKLNLAQTMYHFISGYTAIVAGTEDGVKEPTATFSACFGAAFIMYHPTKYAAMLAEKMQKYGATGWLVNTGWSGGRYGVGNRIKLPYTRKIIDAIHSGELLNASYKKTEVFGLEIPTAINGVPSEILGPVNTWTDKAAYKETLLKLAGLFKNNFEVFASYKIGNNNSLTEQILAAAPNF.

2 disordered regions span residues 1–23 and 64–86; these read MASP…APVN and PNLV…KHQQ. An ATP-binding site is contributed by 324 to 331; the sequence is GLSGTGKT.

Belongs to the phosphoenolpyruvate carboxykinase (ATP) family. In terms of assembly, homohexamer.

Its subcellular location is the cytoplasm. It carries out the reaction oxaloacetate + ATP = phosphoenolpyruvate + ADP + CO2. The protein operates within carbohydrate biosynthesis; gluconeogenesis. This chain is Phosphoenolpyruvate carboxykinase (ATP) 2 (PCK2), found in Urochloa panicoides (Panic liverseed grass).